The following is a 181-amino-acid chain: ATP synthase subunit delta (181 aa).

This sequence belongs to the ATPase delta chain family. In terms of assembly, F-type ATPases have 2 components, F(1) - the catalytic core - and F(0) - the membrane proton channel. F(1) has five subunits: alpha(3), beta(3), gamma(1), delta(1), epsilon(1). F(0) has three main subunits: a(1), b(2) and c(10-14). The alpha and beta chains form an alternating ring which encloses part of the gamma chain. F(1) is attached to F(0) by a central stalk formed by the gamma and epsilon chains, while a peripheral stalk is formed by the delta and b chains.

The protein resides in the cell inner membrane. Its function is as follows. F(1)F(0) ATP synthase produces ATP from ADP in the presence of a proton or sodium gradient. F-type ATPases consist of two structural domains, F(1) containing the extramembraneous catalytic core and F(0) containing the membrane proton channel, linked together by a central stalk and a peripheral stalk. During catalysis, ATP synthesis in the catalytic domain of F(1) is coupled via a rotary mechanism of the central stalk subunits to proton translocation. Functionally, this protein is part of the stalk that links CF(0) to CF(1). It either transmits conformational changes from CF(0) to CF(1) or is implicated in proton conduction. This chain is ATP synthase subunit delta, found in Desulfotalea psychrophila (strain LSv54 / DSM 12343).